The primary structure comprises 222 residues: MKPTSSAAARNELASDKAAALALTPVSRETERRLDRYIALLLEWQAKTNLVAPSTLPHLWTRHISDSLQLLDLAPEASFWVDLGSGGGFPGVVLACALAERPGAKVHLVERIAKKAAFLREAIRVTGSPGTVHLSEIGDIVEKWSGRVDCVTARALAPLHQLVGFAEPLVKKGAKALFLKGQDVDAELTESTKYWKIEPKLHSSRTGGQGWIVAIDCIERRS.

S-adenosyl-L-methionine is bound by residues G84, F89, 141 to 142 (VE), and R154.

Belongs to the methyltransferase superfamily. RNA methyltransferase RsmG family.

Its subcellular location is the cytoplasm. It carries out the reaction guanosine(527) in 16S rRNA + S-adenosyl-L-methionine = N(7)-methylguanosine(527) in 16S rRNA + S-adenosyl-L-homocysteine. Functionally, specifically methylates the N7 position of guanine in position 527 of 16S rRNA. This Bradyrhizobium sp. (strain ORS 278) protein is Ribosomal RNA small subunit methyltransferase G.